The primary structure comprises 236 residues: Concanavalin-Ma (236 aa).

The Mn(2+) site is built by Glu-8 and Asp-10. Residues Asp-10, Tyr-12, Asn-14, and Asp-19 each contribute to the Ca(2+) site. Tyr-12 serves as a coordination point for a carbohydrate. Residues Asp-19 and His-24 each contribute to the Mn(2+) site. 98-99 contacts a carbohydrate; it reads LY. Ca(2+) is bound at residue Asp-207. Arg-227 contributes to the a carbohydrate binding site.

Belongs to the leguminous lectin family. As to quaternary structure, homotetramer.

Its function is as follows. Glucose/D-mannose specific lectin. The protein is Concanavalin-Ma of Canavalia rosea (Beach bean).